Reading from the N-terminus, the 399-residue chain is Elongation factor Tu (399 aa).

Residues 10–209 enclose the tr-type G domain; the sequence is KPHVNIGTIG…AVDEYIPTPE (200 aa). The interval 19–26 is G1; the sequence is GHVDHGKT. A GTP-binding site is contributed by 19–26; it reads GHVDHGKT. Residue Thr-26 participates in Mg(2+) binding. A G2 region spans residues 60–64; the sequence is GITIN. Positions 81–84 are G3; sequence DCPG. GTP-binding positions include 81 to 85 and 136 to 139; these read DCPGH and NKMD. The segment at 136–139 is G4; sequence NKMD. Residues 174–176 form a G5 region; that stretch reads SAL.

The protein belongs to the TRAFAC class translation factor GTPase superfamily. Classic translation factor GTPase family. EF-Tu/EF-1A subfamily. Monomer.

It is found in the cytoplasm. It carries out the reaction GTP + H2O = GDP + phosphate + H(+). Its function is as follows. GTP hydrolase that promotes the GTP-dependent binding of aminoacyl-tRNA to the A-site of ribosomes during protein biosynthesis. The polypeptide is Elongation factor Tu (Nautilia profundicola (strain ATCC BAA-1463 / DSM 18972 / AmH)).